We begin with the raw amino-acid sequence, 342 residues long: Phosphate acyltransferase (342 aa).

The protein belongs to the PlsX family. Homodimer. Probably interacts with PlsY.

It is found in the cytoplasm. It catalyses the reaction a fatty acyl-[ACP] + phosphate = an acyl phosphate + holo-[ACP]. It functions in the pathway lipid metabolism; phospholipid metabolism. Catalyzes the reversible formation of acyl-phosphate (acyl-PO(4)) from acyl-[acyl-carrier-protein] (acyl-ACP). This enzyme utilizes acyl-ACP as fatty acyl donor, but not acyl-CoA. The polypeptide is Phosphate acyltransferase (Shewanella sediminis (strain HAW-EB3)).